Consider the following 305-residue polypeptide: 2-oxoacid:ferredoxin oxidoreductase subunit beta (305 aa).

[4Fe-4S] cluster contacts are provided by cysteine 12, cysteine 15, and cysteine 46. Residues 44–47 (IGCS) and histidine 65 contribute to the thiamine diphosphate site. Aspartate 90 is a Mg(2+) binding site. Position 91–92 (91–92 (GD)) interacts with thiamine diphosphate. Mg(2+)-binding residues include asparagine 118 and valine 120. Position 122–123 (122–123 (GL)) interacts with thiamine diphosphate. A [4Fe-4S] cluster-binding site is contributed by cysteine 197.

As to quaternary structure, heterodimer composed of an alpha and a beta subunit. It depends on [4Fe-4S] cluster as a cofactor. Thiamine diphosphate serves as cofactor. The cofactor is Mg(2+).

The protein localises to the cytoplasm. The enzyme catalyses a 2-oxocarboxylate + 2 oxidized [2Fe-2S]-[ferredoxin] + CoA = an acyl-CoA + 2 reduced [2Fe-2S]-[ferredoxin] + CO2 + H(+). In terms of biological role, catalyzes the coenzyme A-dependent oxidative decarboxylation of different 2-oxoacids such as 2-oxoglutarate, pyruvate and 2-oxobutyrate to form their CoA derivatives. This Sulfolobus sp protein is 2-oxoacid:ferredoxin oxidoreductase subunit beta.